We begin with the raw amino-acid sequence, 543 residues long: Thermosome subunit beta (543 aa).

The segment at 522–543 (TKSSSSSSNPPKSGSSSESSED) is disordered. Over residues 523-543 (KSSSSSSNPPKSGSSSESSED) the composition is skewed to low complexity.

This sequence belongs to the TCP-1 chaperonin family. Forms a Heterooligomeric complex of two stacked eight-membered rings. The N-terminus is blocked.

Functionally, molecular chaperone; binds unfolded polypeptides in vitro, and has a weak ATPase activity. This chain is Thermosome subunit beta (thsB), found in Thermoplasma acidophilum (strain ATCC 25905 / DSM 1728 / JCM 9062 / NBRC 15155 / AMRC-C165).